We begin with the raw amino-acid sequence, 388 residues long: Glucose-6-phosphate/phosphate translocator 2, chloroplastic (388 aa).

The transit peptide at 1-68 (MLSSIKPSSS…SASNFKREVK (68 aa)) directs the protein to the chloroplast. The next 8 helical transmembrane spans lie at 95–115 (LKIG…NIYN), 122–142 (FPYP…MMLV), 158–178 (FWKT…AATV), 211–231 (FPLP…LAAI), 233–253 (ELNF…AFVF), 281–301 (LVIL…AAGW), 305–325 (VSQV…FYHL), and 358–378 (IIIF…IAIF). The 119-residue stretch at 113–231 (IYNKKVLNAF…IIGGCALAAI (119 aa)) folds into the EamA domain.

This sequence belongs to the TPT transporter family. GPT (TC 2.A.7.9) subfamily. Expressed in seeds, flowers, stamens, and rosette leaves, with highest levels found in sepals and senescing leaves.

It is found in the plastid. The protein localises to the chloroplast membrane. Its function is as follows. Glucose 6-phosphate (Glc6P) transporter. Also transports inorganic phosphate, 3-phosphoglycerate, triose phosphates and, to a leser extent, phosphoenolpyruvate. Responsible for the transport of Glc6P into plastids of heterotrophic tissues where it can be used as a carbon source for starch biosynthesis, as substrate for fatty acid biosynthesis or as substrate for NADPH generation via the oxidative pentose phosphate pathway (OPPP). Required for dynamic acclimation of photosynthesis and partitioning of Glc6P between the chloroplast and the cytosol. May modulate the sensing of sugar status during early seedling development. In Arabidopsis thaliana (Mouse-ear cress), this protein is Glucose-6-phosphate/phosphate translocator 2, chloroplastic.